The following is a 677-amino-acid chain: UvrABC system protein B (677 aa).

A Helicase ATP-binding domain is found at 25 to 412; it reads DGVNSGREYQ…SGAIIEQVIR (388 aa). 38–45 lines the ATP pocket; the sequence is GATGTGKT. Positions 91–114 match the Beta-hairpin motif; that stretch reads YYDYYQPEAYVPVSDTYIAKTSSI. The Helicase C-terminal domain occupies 429 to 591; the sequence is QVEDLLDEIR…IVPMPAGKKA (163 aa). Residues 639-674 form the UVR domain; sequence PQLIDELETKMKKSAKDLDFENAAKLRDKIHQLRKK.

It belongs to the UvrB family. Forms a heterotetramer with UvrA during the search for lesions. Interacts with UvrC in an incision complex.

It localises to the cytoplasm. Its function is as follows. The UvrABC repair system catalyzes the recognition and processing of DNA lesions. A damage recognition complex composed of 2 UvrA and 2 UvrB subunits scans DNA for abnormalities. Upon binding of the UvrA(2)B(2) complex to a putative damaged site, the DNA wraps around one UvrB monomer. DNA wrap is dependent on ATP binding by UvrB and probably causes local melting of the DNA helix, facilitating insertion of UvrB beta-hairpin between the DNA strands. Then UvrB probes one DNA strand for the presence of a lesion. If a lesion is found the UvrA subunits dissociate and the UvrB-DNA preincision complex is formed. This complex is subsequently bound by UvrC and the second UvrB is released. If no lesion is found, the DNA wraps around the other UvrB subunit that will check the other stand for damage. This chain is UvrABC system protein B, found in Prochlorococcus marinus (strain SARG / CCMP1375 / SS120).